A 380-amino-acid polypeptide reads, in one-letter code: Carbamoyl phosphate synthase small chain (380 aa).

Residues 1 to 187 (MTTSTRGAAK…VVPAIGAKRF (187 aa)) are CPSase. The L-glutamine site is built by S55, G236, and G238. One can recognise a Glutamine amidotransferase type-1 domain in the interval 188–380 (TVAAVDLGIK…FVSLMEGQRA (193 aa)). C264 functions as the Nucleophile in the catalytic mechanism. 5 residues coordinate L-glutamine: F265, Q268, N306, G308, and F309. Active-site residues include H354 and E356.

Belongs to the CarA family. Composed of two chains; the small (or glutamine) chain promotes the hydrolysis of glutamine to ammonia, which is used by the large (or ammonia) chain to synthesize carbamoyl phosphate. Tetramer of heterodimers (alpha,beta)4.

The enzyme catalyses hydrogencarbonate + L-glutamine + 2 ATP + H2O = carbamoyl phosphate + L-glutamate + 2 ADP + phosphate + 2 H(+). It carries out the reaction L-glutamine + H2O = L-glutamate + NH4(+). It functions in the pathway amino-acid biosynthesis; L-arginine biosynthesis; carbamoyl phosphate from bicarbonate: step 1/1. It participates in pyrimidine metabolism; UMP biosynthesis via de novo pathway; (S)-dihydroorotate from bicarbonate: step 1/3. Its function is as follows. Small subunit of the glutamine-dependent carbamoyl phosphate synthetase (CPSase). CPSase catalyzes the formation of carbamoyl phosphate from the ammonia moiety of glutamine, carbonate, and phosphate donated by ATP, constituting the first step of 2 biosynthetic pathways, one leading to arginine and/or urea and the other to pyrimidine nucleotides. The small subunit (glutamine amidotransferase) binds and cleaves glutamine to supply the large subunit with the substrate ammonia. This chain is Carbamoyl phosphate synthase small chain, found in Streptomyces avermitilis (strain ATCC 31267 / DSM 46492 / JCM 5070 / NBRC 14893 / NCIMB 12804 / NRRL 8165 / MA-4680).